Here is a 418-residue protein sequence, read N- to C-terminus: Ankyrin repeat domain-containing protein 61 (418 aa).

8 ANK repeats span residues 27–57, 75–104, 132–161, 167–196, 200–229, 234–273, 277–306, and 310–343; these read ALHS…NQPI, ESII…DPEV, NRTH…QVNT, NKRS…DVNA, ASMT…NVNC, TGNT…KVNA, KGQT…NVNI, and NGES…PLRM.

This chain is Ankyrin repeat domain-containing protein 61 (ANKRD61), found in Homo sapiens (Human).